A 221-amino-acid polypeptide reads, in one-letter code: Octanoyltransferase (221 aa).

The BPL/LPL catalytic domain maps to 35-221 (ESYENRIIFC…RELLAALLSK (187 aa)). Residues 80 to 87 (RGGDITYH), 152 to 154 (AIG), and 165 to 167 (GLA) contribute to the substrate site. Cysteine 183 (acyl-thioester intermediate) is an active-site residue.

It belongs to the LipB family.

The protein localises to the cytoplasm. It carries out the reaction octanoyl-[ACP] + L-lysyl-[protein] = N(6)-octanoyl-L-lysyl-[protein] + holo-[ACP] + H(+). Its pathway is protein modification; protein lipoylation via endogenous pathway; protein N(6)-(lipoyl)lysine from octanoyl-[acyl-carrier-protein]: step 1/2. Functionally, catalyzes the transfer of endogenously produced octanoic acid from octanoyl-acyl-carrier-protein onto the lipoyl domains of lipoate-dependent enzymes. Lipoyl-ACP can also act as a substrate although octanoyl-ACP is likely to be the physiological substrate. In Bacteroides fragilis (strain YCH46), this protein is Octanoyltransferase.